We begin with the raw amino-acid sequence, 876 residues long: Phosphoenolpyruvate carboxylase (876 aa).

Catalysis depends on residues His138 and Lys543.

This sequence belongs to the PEPCase type 1 family. Requires Mg(2+) as cofactor.

It catalyses the reaction oxaloacetate + phosphate = phosphoenolpyruvate + hydrogencarbonate. In terms of biological role, forms oxaloacetate, a four-carbon dicarboxylic acid source for the tricarboxylic acid cycle. This Aliivibrio salmonicida (strain LFI1238) (Vibrio salmonicida (strain LFI1238)) protein is Phosphoenolpyruvate carboxylase.